The primary structure comprises 162 residues: Solute carrier family 2, facilitated glucose transporter member 4 (162 aa).

Over 1–13 the chain is Extracellular; the sequence is TSIFETAGVGQPA. A helical membrane pass occupies residues 14 to 34; the sequence is YATIGAGVVNTVFTLVSVFLV. Asn-23 serves as a coordination point for D-glucose. Topologically, residues 35–43 are cytoplasmic; sequence ERAGRRTLH. The chain crosses the membrane as a helical span at residues 44-64; that stretch reads LLGLAGMCGCAILMTIALLLL. Topologically, residues 65–75 are extracellular; sequence ERLPAMSYVSI. Residues 76–96 traverse the membrane as a helical segment; sequence VAIFGFVAFFEIGPGPIPWFI. Positions 86 and 94 each coordinate D-glucose. Topologically, residues 97 to 107 are cytoplasmic; sequence VAELFSQGPRP. A helical membrane pass occupies residues 108-128; it reads AAMAVAGFCNWTSNFIIGMGF. Over 129–135 the chain is Extracellular; it reads QYIAXAM. A helical membrane pass occupies residues 136-156; the sequence is GPYVFLLFAVLLLAFFIFTFL. At 157–162 the chain is on the cytoplasmic side; sequence KVPETR.

It belongs to the major facilitator superfamily. Sugar transporter (TC 2.A.1.1) family. Glucose transporter subfamily. As to quaternary structure, binds to DAXX. Interacts via its N-terminus with SRFBP1. Interacts with NDUFA9. Interacts with TRARG1; the interaction is required for proper SLC2A4 recycling after insulin stimulation. Sumoylated. Post-translationally, palmitoylated. Palmitoylation by ZDHHC7 controls the insulin-dependent translocation of GLUT4 to the plasma membrane.

The protein localises to the cell membrane. Its subcellular location is the endomembrane system. The protein resides in the cytoplasm. It localises to the perinuclear region. The catalysed reaction is D-glucose(out) = D-glucose(in). Functionally, insulin-regulated facilitative glucose transporter, which plays a key role in removal of glucose from circulation. Response to insulin is regulated by its intracellular localization: in the absence of insulin, it is efficiently retained intracellularly within storage compartments in muscle and fat cells. Upon insulin stimulation, translocates from these compartments to the cell surface where it transports glucose from the extracellular milieu into the cell. This Canis lupus familiaris (Dog) protein is Solute carrier family 2, facilitated glucose transporter member 4.